We begin with the raw amino-acid sequence, 71 residues long: Protein translocase subunit SecE (71 aa).

The helical transmembrane segment at 43 to 63 (VAGAGILAVGAIGFIIYVLLT) threads the bilayer.

This sequence belongs to the SecE/SEC61-gamma family. In terms of assembly, component of the Sec protein translocase complex. Heterotrimer consisting of SecY (alpha), SecG (beta) and SecE (gamma) subunits. The heterotrimers can form oligomers, although 1 heterotrimer is thought to be able to translocate proteins. Interacts with the ribosome. May interact with SecDF, and other proteins may be involved.

The protein localises to the cell membrane. Functionally, essential subunit of the Sec protein translocation channel SecYEG. Clamps together the 2 halves of SecY. May contact the channel plug during translocation. This Methanosarcina acetivorans (strain ATCC 35395 / DSM 2834 / JCM 12185 / C2A) protein is Protein translocase subunit SecE.